The following is an 872-amino-acid chain: Paladin (872 aa).

Residues 1–37 (MGTTASAAQQVPSTVPSSENVQGNGSGSSNVEDRNSL) are disordered. Residue glycine 2 is the site of N-myristoyl glycine attachment. The stretch at 186 to 210 (RRKENLHENLHDLEKGLRAENLELA) forms a coiled coil.

This sequence belongs to the paladin family.

Its subcellular location is the cytoplasm. It is found in the cytosol. The polypeptide is Paladin (pald1) (Xenopus tropicalis (Western clawed frog)).